The chain runs to 253 residues: Triosephosphate isomerase, cytosolic (253 aa).

Residues Asn10 and Lys12 each contribute to the substrate site. His96 serves as the catalytic Electrophile. Glu166 serves as the catalytic Proton acceptor.

This sequence belongs to the triosephosphate isomerase family. As to quaternary structure, homodimer. As to expression, starchy endosperm.

The protein resides in the cytoplasm. The catalysed reaction is D-glyceraldehyde 3-phosphate = dihydroxyacetone phosphate. The protein operates within carbohydrate biosynthesis; gluconeogenesis. Its pathway is carbohydrate degradation; glycolysis; D-glyceraldehyde 3-phosphate from glycerone phosphate: step 1/1. The polypeptide is Triosephosphate isomerase, cytosolic (Hordeum vulgare (Barley)).